Reading from the N-terminus, the 278-residue chain is ATPase SWSAP1 (278 aa).

The tract at residues 237-278 (SPEKKDSSAGSQSLTLGCDNLPGPGSPLDGILTSETGADSKT) is disordered. Polar residues predominate over residues 269–278 (TSETGADSKT).

In terms of assembly, interacts with ZSWIM7; they form a functional complex involved in homologous recombination repair and stabilize each other. Interacts with RAD51, RAD51B, RAD51C, RAD51D and XRCC3; involved in homologous recombination repair.

It is found in the nucleus. Its function is as follows. ATPase which is preferentially stimulated by single-stranded DNA and is involved in homologous recombination repair (HRR). Has a DNA-binding activity which is independent of its ATPase activity. In Mus musculus (Mouse), this protein is ATPase SWSAP1 (Swsap1).